We begin with the raw amino-acid sequence, 375 residues long: Putative prophage phiRv2 integrase (375 aa).

In terms of domain architecture, Core-binding (CB) spans 75–153 (APFGEYAEGW…LLRAIMQTAL (79 aa)). In terms of domain architecture, Tyr recombinase spans 175–364 (HKIRPATLDE…AKGRDREIAA (190 aa)). Residues Arg209, His316, Arg319, and His342 contribute to the active site. Tyr351 functions as the O-(3'-phospho-DNA)-tyrosine intermediate in the catalytic mechanism.

Belongs to the 'phage' integrase family.

Its function is as follows. Integrase is necessary for integration of the phage into the host genome by site-specific recombination. In conjunction with excisionase, integrase is also necessary for excision of the prophage from the host genome. This chain is Putative prophage phiRv2 integrase, found in Mycobacterium tuberculosis (strain CDC 1551 / Oshkosh).